We begin with the raw amino-acid sequence, 323 residues long: uncharacterized protein (323 aa).

Helical transmembrane passes span 232-252 and 267-287; these read LASY…FIVL and SLIV…GVIG.

Belongs to the glycosyltransferase 2 family. GtrB subfamily.

The protein localises to the cell membrane. This is an uncharacterized protein from Bacillus subtilis (strain 168).